The following is a 355-amino-acid chain: UDP-N-acetylglucosamine--N-acetylmuramyl-(pentapeptide) pyrophosphoryl-undecaprenol N-acetylglucosamine transferase (355 aa).

UDP-N-acetyl-alpha-D-glucosamine-binding positions include 15–17, N127, R163, S191, I244, 263–268, and Q288; these read TGG and ALTVSE.

This sequence belongs to the glycosyltransferase 28 family. MurG subfamily.

It is found in the cell inner membrane. It catalyses the reaction di-trans,octa-cis-undecaprenyl diphospho-N-acetyl-alpha-D-muramoyl-L-alanyl-D-glutamyl-meso-2,6-diaminopimeloyl-D-alanyl-D-alanine + UDP-N-acetyl-alpha-D-glucosamine = di-trans,octa-cis-undecaprenyl diphospho-[N-acetyl-alpha-D-glucosaminyl-(1-&gt;4)]-N-acetyl-alpha-D-muramoyl-L-alanyl-D-glutamyl-meso-2,6-diaminopimeloyl-D-alanyl-D-alanine + UDP + H(+). Its pathway is cell wall biogenesis; peptidoglycan biosynthesis. Its function is as follows. Cell wall formation. Catalyzes the transfer of a GlcNAc subunit on undecaprenyl-pyrophosphoryl-MurNAc-pentapeptide (lipid intermediate I) to form undecaprenyl-pyrophosphoryl-MurNAc-(pentapeptide)GlcNAc (lipid intermediate II). The polypeptide is UDP-N-acetylglucosamine--N-acetylmuramyl-(pentapeptide) pyrophosphoryl-undecaprenol N-acetylglucosamine transferase (Salmonella paratyphi A (strain ATCC 9150 / SARB42)).